The sequence spans 324 residues: Cuticle collagen sqt-1 (324 aa).

Disordered regions lie at residues 68-108 (RRQY…TPNG) and 129-324 (SGPK…YRNI). A compositionally biased stretch (pro residues) spans 87–97 (SAPPGQPPAVP). Triple-helical region regions lie at residues 127 to 153 (GPSG…PGVG), 171 to 231 (QGPV…KGRD), and 237 to 299 (GRPG…PGKD). 2 stretches are compositionally biased toward low complexity: residues 129 to 156 (SGPK…GADD) and 177 to 201 (PGAL…PGRD). The segment covering 227–236 (EKGRDAEHPI) has biased composition (basic and acidic residues).

The protein belongs to the cuticular collagen family. Collagen polypeptide chains are complexed within the cuticle by disulfide bonds and other types of covalent cross-links.

Nematode cuticles are composed largely of collagen-like proteins. The cuticle functions both as an exoskeleton and as a barrier to protect the worm from its environment. This is a collagen critical for organismal morphogenesis. Mutations in sqt-1 can lengthen, shorten, or helically twist the entire animal. This chain is Cuticle collagen sqt-1 (sqt-1), found in Caenorhabditis elegans.